We begin with the raw amino-acid sequence, 82 residues long: Small, acid-soluble spore protein gamma-type (82 aa).

Composition is skewed to polar residues over residues 1–24 and 32–50; these read MANS…ASGQ and ASET…SAAG. Residues 1 to 82 are disordered; sequence MANSNNKTNA…SAEQNKQQNS (82 aa). Repeats lie at residues 19–45 and 46–72; these read QSAS…KQNQ and QSAA…QQNQ. A compositionally biased stretch (low complexity) spans 69-82; that stretch reads QQNQSAEQNKQQNS.

This sequence belongs to the gamma-type SASP family.

SASP are bound to spore DNA. They are double-stranded DNA-binding proteins that cause DNA to change to an a-like conformation. They protect the DNA backbone from chemical and enzymatic cleavage and are thus involved in dormant spore's high resistance to UV light. This chain is Small, acid-soluble spore protein gamma-type, found in Bacillus subtilis.